We begin with the raw amino-acid sequence, 162 residues long: NADH-quinone oxidoreductase subunit I (162 aa).

4Fe-4S ferredoxin-type domains are found at residues 53 to 83 (LRRY…IESD) and 93 to 122 (TRYD…ETHI). The [4Fe-4S] cluster site is built by Cys63, Cys66, Cys69, Cys73, Cys102, Cys105, Cys108, and Cys112.

It belongs to the complex I 23 kDa subunit family. NDH-1 is composed of 14 different subunits. Subunits NuoA, H, J, K, L, M, N constitute the membrane sector of the complex. The cofactor is [4Fe-4S] cluster.

It localises to the cell inner membrane. The catalysed reaction is a quinone + NADH + 5 H(+)(in) = a quinol + NAD(+) + 4 H(+)(out). NDH-1 shuttles electrons from NADH, via FMN and iron-sulfur (Fe-S) centers, to quinones in the respiratory chain. The immediate electron acceptor for the enzyme in this species is believed to be ubiquinone. Couples the redox reaction to proton translocation (for every two electrons transferred, four hydrogen ions are translocated across the cytoplasmic membrane), and thus conserves the redox energy in a proton gradient. The protein is NADH-quinone oxidoreductase subunit I of Bordetella avium (strain 197N).